The chain runs to 406 residues: Arginine decarboxylase (406 aa).

Lysine 8 is subject to N6-(pyridoxal phosphate)lysine. 192–202 (VDFGGGLGIDY) is a substrate binding site.

This sequence belongs to the Orn/Lys/Arg decarboxylase class-II family. SpeA subfamily. The cofactor is pyridoxal 5'-phosphate. It depends on Mg(2+) as a cofactor.

The catalysed reaction is L-arginine + H(+) = agmatine + CO2. Its pathway is amine and polyamine biosynthesis; agmatine biosynthesis; agmatine from L-arginine: step 1/1. The sequence is that of Arginine decarboxylase (SPE2) from Theobroma cacao (Cacao).